The following is a 567-amino-acid chain: Arginine--tRNA ligase (567 aa).

The 'HIGH' region signature appears at 128–138 (ANPTGPLHVGH).

It belongs to the class-I aminoacyl-tRNA synthetase family. Monomer.

Its subcellular location is the cytoplasm. It catalyses the reaction tRNA(Arg) + L-arginine + ATP = L-arginyl-tRNA(Arg) + AMP + diphosphate. In Acidovorax ebreus (strain TPSY) (Diaphorobacter sp. (strain TPSY)), this protein is Arginine--tRNA ligase.